The chain runs to 60 residues: Toxin S4C8 (60 aa).

4 disulfide bridges follow: Cys3–Cys22, Cys17–Cys39, Cys41–Cys52, and Cys53–Cys58. The tract at residues 41 to 48 is important for binding to L-type calcium channels; it reads CPTAMWPY.

This sequence belongs to the three-finger toxin family. Short-chain subfamily. L-type calcium blocker sub-subfamily. In terms of tissue distribution, expressed by the venom gland.

The protein localises to the secreted. Functionally, this specific blocker of the L-type calcium channel (Cav1/CACNA1) is a smooth muscle relaxant and an inhibitor of cardiac contractions. The sequence is that of Toxin S4C8 from Dendroaspis jamesoni kaimosae (Eastern Jameson's mamba).